We begin with the raw amino-acid sequence, 461 residues long: Cysteine--tRNA ligase (461 aa).

A Zn(2+)-binding site is contributed by cysteine 29. A 'HIGH' region motif is present at residues 31–41 (MTVYDLCHLGH). 3 residues coordinate Zn(2+): cysteine 213, histidine 238, and glutamate 242. Positions 270 to 274 (KMSKS) match the 'KMSKS' region motif. Lysine 273 serves as a coordination point for ATP.

This sequence belongs to the class-I aminoacyl-tRNA synthetase family. In terms of assembly, monomer. Zn(2+) serves as cofactor.

The protein resides in the cytoplasm. The enzyme catalyses tRNA(Cys) + L-cysteine + ATP = L-cysteinyl-tRNA(Cys) + AMP + diphosphate. The sequence is that of Cysteine--tRNA ligase from Delftia acidovorans (strain DSM 14801 / SPH-1).